The chain runs to 223 residues: Thiamine-phosphate synthase (223 aa).

4-amino-2-methyl-5-(diphosphooxymethyl)pyrimidine-binding positions include Gln45–Lys49 and Asn77. The Mg(2+) site is built by Asp78 and Asp97. Thr116 is a 4-amino-2-methyl-5-(diphosphooxymethyl)pyrimidine binding site. Ser142–Thr144 contributes to the 2-[(2R,5Z)-2-carboxy-4-methylthiazol-5(2H)-ylidene]ethyl phosphate binding site. Residue Lys145 coordinates 4-amino-2-methyl-5-(diphosphooxymethyl)pyrimidine. Residues Gly173 and Val193–Thr194 contribute to the 2-[(2R,5Z)-2-carboxy-4-methylthiazol-5(2H)-ylidene]ethyl phosphate site.

Belongs to the thiamine-phosphate synthase family. The cofactor is Mg(2+).

It carries out the reaction 2-[(2R,5Z)-2-carboxy-4-methylthiazol-5(2H)-ylidene]ethyl phosphate + 4-amino-2-methyl-5-(diphosphooxymethyl)pyrimidine + 2 H(+) = thiamine phosphate + CO2 + diphosphate. The enzyme catalyses 2-(2-carboxy-4-methylthiazol-5-yl)ethyl phosphate + 4-amino-2-methyl-5-(diphosphooxymethyl)pyrimidine + 2 H(+) = thiamine phosphate + CO2 + diphosphate. It catalyses the reaction 4-methyl-5-(2-phosphooxyethyl)-thiazole + 4-amino-2-methyl-5-(diphosphooxymethyl)pyrimidine + H(+) = thiamine phosphate + diphosphate. It functions in the pathway cofactor biosynthesis; thiamine diphosphate biosynthesis; thiamine phosphate from 4-amino-2-methyl-5-diphosphomethylpyrimidine and 4-methyl-5-(2-phosphoethyl)-thiazole: step 1/1. Its function is as follows. Condenses 4-methyl-5-(beta-hydroxyethyl)thiazole monophosphate (THZ-P) and 2-methyl-4-amino-5-hydroxymethyl pyrimidine pyrophosphate (HMP-PP) to form thiamine monophosphate (TMP). This Dictyoglomus turgidum (strain DSM 6724 / Z-1310) protein is Thiamine-phosphate synthase.